We begin with the raw amino-acid sequence, 29 residues long: Kunitz-type serine protease inhibitor RsTIQ7 (29 aa).

Residues 6–26 (QCVPTADPGPCKAYIPMWWYN) form the BPTI/Kunitz inhibitor domain.

Serine protease inhibitor. Inhibits trypsin, elastase, plasmin and kallikrein. The polypeptide is Kunitz-type serine protease inhibitor RsTIQ7 (Rhipicephalus sanguineus (Brown dog tick)).